The sequence spans 87 residues: MKIILWLCVFGLFLATLFPVSWQMPVESGLSSEDSASSESFASKIKRHSDGTFTSDLSKQMEEEAVRLFIEWLKNGGPSSGAPPPSG.

A signal peptide spans 1–21 (MKIILWLCVFGLFLATLFPVS). The propeptide occupies 22–45 (WQMPVESGLSSEDSASSESFASKI). A Serine amide modification is found at S86.

It belongs to the glucagon family. Expressed by the venom gland.

The protein resides in the secreted. In terms of biological role, stimulates vasoactive intestinal peptide (VIP) receptors in high concentrations (&gt;100 nM), resulting in both an increase in cAMP and amylase secretion from pancreatic acini, although at low concentrations (between 0.3 and 3 nM) it increases cAMP without stimulating amylase release. Stimulates the GLP-1 receptor (GLP1R). Induces hypotension that is mediated by relaxation of cardiac smooth muscle. The chain is Exendin-3 from Heloderma horridum horridum (Mexican beaded lizard).